A 551-amino-acid chain; its full sequence is Glucans biosynthesis protein D (551 aa).

Residues 1-32 (MDRRRFIKGSMAMAAVCGTSGIASLFSQAAFA) constitute a signal peptide (tat-type signal).

It belongs to the OpgD/OpgG family. Post-translationally, predicted to be exported by the Tat system. The position of the signal peptide cleavage has not been experimentally proven.

It is found in the periplasm. Its pathway is glycan metabolism; osmoregulated periplasmic glucan (OPG) biosynthesis. Probably involved in the control of the structural glucose backbone of osmoregulated periplasmic glucans (OPGs). In Shigella flexneri, this protein is Glucans biosynthesis protein D (mdoD).